Here is a 355-residue protein sequence, read N- to C-terminus: Elongation factor Ts, mitochondrial (355 aa).

The N-terminal 46 residues, 1 to 46 (MIRSLNFALRNCNKNILINSNKITINNGLLLKKNNFCTQSTSEVKV), are a transit peptide targeting the mitochondrion.

Belongs to the EF-Ts family.

The protein resides in the mitochondrion. Functionally, associates with the EF-Tu.GDP complex and induces the exchange of GDP to GTP. It remains bound to the aminoacyl-tRNA.EF-Tu.GTP complex up to the GTP hydrolysis stage on the ribosome. This chain is Elongation factor Ts, mitochondrial (tsfm), found in Dictyostelium discoideum (Social amoeba).